The sequence spans 370 residues: 3-isopropylmalate dehydrogenase (370 aa).

Residue 77–90 (GPKWDSVPYEVRPE) participates in NAD(+) binding. Residues arginine 97, arginine 107, arginine 135, and aspartate 226 each contribute to the substrate site. 3 residues coordinate Mg(2+): aspartate 226, aspartate 250, and aspartate 254. An NAD(+)-binding site is contributed by 290-302 (GSAPDIAGKGIAN).

This sequence belongs to the isocitrate and isopropylmalate dehydrogenases family. LeuB type 1 subfamily. As to quaternary structure, homodimer. Mg(2+) serves as cofactor. Mn(2+) is required as a cofactor.

It is found in the cytoplasm. The catalysed reaction is (2R,3S)-3-isopropylmalate + NAD(+) = 4-methyl-2-oxopentanoate + CO2 + NADH. It participates in amino-acid biosynthesis; L-leucine biosynthesis; L-leucine from 3-methyl-2-oxobutanoate: step 3/4. Its function is as follows. Catalyzes the oxidation of 3-carboxy-2-hydroxy-4-methylpentanoate (3-isopropylmalate) to 3-carboxy-4-methyl-2-oxopentanoate. The product decarboxylates to 4-methyl-2 oxopentanoate. The sequence is that of 3-isopropylmalate dehydrogenase from Rhizobium etli (strain ATCC 51251 / DSM 11541 / JCM 21823 / NBRC 15573 / CFN 42).